The following is a 343-amino-acid chain: tRNA N6-adenosine threonylcarbamoyltransferase (343 aa).

Residues His120 and His124 each coordinate Fe cation. Residues Val142 to Gly146, Asp175, Gly188, Asp192, and Asn281 contribute to the substrate site. A Fe cation-binding site is contributed by Asp310.

Belongs to the KAE1 / TsaD family. It depends on Fe(2+) as a cofactor.

The protein localises to the cytoplasm. The enzyme catalyses L-threonylcarbamoyladenylate + adenosine(37) in tRNA = N(6)-L-threonylcarbamoyladenosine(37) in tRNA + AMP + H(+). Functionally, required for the formation of a threonylcarbamoyl group on adenosine at position 37 (t(6)A37) in tRNAs that read codons beginning with adenine. Is involved in the transfer of the threonylcarbamoyl moiety of threonylcarbamoyl-AMP (TC-AMP) to the N6 group of A37, together with TsaE and TsaB. TsaD likely plays a direct catalytic role in this reaction. The polypeptide is tRNA N6-adenosine threonylcarbamoyltransferase (Bacillus cereus (strain ATCC 10987 / NRS 248)).